The following is a 432-amino-acid chain: Adenylosuccinate synthetase (432 aa).

Residues 12–18 (GDEGKGK) and 40–42 (GHT) contribute to the GTP site. Residue aspartate 13 is the Proton acceptor of the active site. The Mg(2+) site is built by aspartate 13 and glycine 40. Residues 13 to 16 (DEGK), 38 to 41 (NAGH), threonine 132, arginine 146, glutamine 226, threonine 241, and arginine 305 contribute to the IMP site. Histidine 41 serves as the catalytic Proton donor. A substrate-binding site is contributed by 301-307 (VVTGRKR). GTP contacts are provided by residues arginine 307, 333 to 335 (KLD), and 415 to 417 (STS).

Belongs to the adenylosuccinate synthetase family. In terms of assembly, homodimer. Mg(2+) serves as cofactor.

It is found in the cytoplasm. The enzyme catalyses IMP + L-aspartate + GTP = N(6)-(1,2-dicarboxyethyl)-AMP + GDP + phosphate + 2 H(+). Its pathway is purine metabolism; AMP biosynthesis via de novo pathway; AMP from IMP: step 1/2. Functionally, plays an important role in the de novo pathway of purine nucleotide biosynthesis. Catalyzes the first committed step in the biosynthesis of AMP from IMP. This chain is Adenylosuccinate synthetase, found in Rhizobium johnstonii (strain DSM 114642 / LMG 32736 / 3841) (Rhizobium leguminosarum bv. viciae).